A 114-amino-acid chain; its full sequence is Small ribosomal subunit protein uS14m (114 aa).

This sequence belongs to the universal ribosomal protein uS14 family.

The protein localises to the mitochondrion. This is Small ribosomal subunit protein uS14m (MRP2) from Eremothecium gossypii (strain ATCC 10895 / CBS 109.51 / FGSC 9923 / NRRL Y-1056) (Yeast).